A 324-amino-acid chain; its full sequence is Cyclic GMP-AMP synthase CdnE03 (324 aa).

The Mg(2+) site is built by Asp87 and Asp89. ATP is bound by residues Asp89, 144–145 (NK), and Asp159. Residue Asp159 participates in Mg(2+) binding. GTP is bound by residues Lys224 and Ser243.

The protein belongs to the CD-NTase family. E03 subfamily. The cofactor is Mg(2+).

The catalysed reaction is GTP + ATP = 3',2'-cGAMP + 2 diphosphate. Its activity is regulated as follows. Activated by a virus-derived, approximately 400 nucleotide RNA (called CBASS-activating bacteriophage RNA, cabRNA) that begins in the viral terminase subunit terS and extends into terL. RNA secondary and/or tertiary structure, as well as viral infection itself, are important for CdnE activation. A much longer RNA (escaper RNA) with a different secondary structure, derived from a terS-mutated virus still binds to this protein, but does not activate its nucleotide cyclase activity. Shorter viral-derived RNAs (34 and 49 nt) with extensive predicted secondary structure also activate the enzyme, although not as well as full-length cabRNA. Functionally, cyclic nucleotide synthase (second messenger synthase) of a CBASS antivirus system. CBASS (cyclic oligonucleotide-based antiphage signaling system) provides immunity against bacteriophage. The CD-NTase protein synthesizes cyclic nucleotides in response to infection; these serve as specific second messenger signals. The signals activate a diverse range of effectors, leading to bacterial cell death and thus abortive phage infection. The effector for this system is downstream Cap15. A type I-B CBASS system. In terms of biological role, cyclic dinucleotide synthase that catalyzes the synthesis of 3',2'-cyclic GMP-AMP (cGAMP) from GTP and ATP upon activation by viral-derived cabRNA. Binds cabRNA via positive charges in its N-terminus. Protects S.aureus against phage infection. When the CBASS operon (cdnE-cap15) is introduced in S.aureus strain RN4220 there is strong protection against lytic DNA phages 80alpha-vir and phi-NM1-gamma-6 but little to no protection against phages phi-NM4-gamma-4 or phi-12-gamma-3. The protein is Cyclic GMP-AMP synthase CdnE03 of Staphylococcus schleiferi.